The primary structure comprises 613 residues: Dihydroxy-acid dehydratase (613 aa).

Position 81 (Asp-81) interacts with Mg(2+). Cys-122 contacts [2Fe-2S] cluster. The Mg(2+) site is built by Asp-123 and Lys-124. Lys-124 carries the N6-carboxylysine modification. Cys-195 serves as a coordination point for [2Fe-2S] cluster. Glu-491 is a binding site for Mg(2+). The Proton acceptor role is filled by Ser-517.

The protein belongs to the IlvD/Edd family. As to quaternary structure, homodimer. It depends on [2Fe-2S] cluster as a cofactor. Mg(2+) is required as a cofactor.

The catalysed reaction is (2R)-2,3-dihydroxy-3-methylbutanoate = 3-methyl-2-oxobutanoate + H2O. The enzyme catalyses (2R,3R)-2,3-dihydroxy-3-methylpentanoate = (S)-3-methyl-2-oxopentanoate + H2O. It participates in amino-acid biosynthesis; L-isoleucine biosynthesis; L-isoleucine from 2-oxobutanoate: step 3/4. The protein operates within amino-acid biosynthesis; L-valine biosynthesis; L-valine from pyruvate: step 3/4. Its function is as follows. Functions in the biosynthesis of branched-chain amino acids. Catalyzes the dehydration of (2R,3R)-2,3-dihydroxy-3-methylpentanoate (2,3-dihydroxy-3-methylvalerate) into 2-oxo-3-methylpentanoate (2-oxo-3-methylvalerate) and of (2R)-2,3-dihydroxy-3-methylbutanoate (2,3-dihydroxyisovalerate) into 2-oxo-3-methylbutanoate (2-oxoisovalerate), the penultimate precursor to L-isoleucine and L-valine, respectively. The polypeptide is Dihydroxy-acid dehydratase (Vibrio vulnificus (strain YJ016)).